Consider the following 779-residue polypeptide: uncharacterized protein (779 aa).

A phosphoserine mark is found at S97 and S120. The span at 125-135 (EIDGEDEKKSV) shows a compositional bias: basic and acidic residues. The segment at 125 to 174 (EIDGEDEKKSVGQESITGSAKRKDRRSKTNGSKRQKAEANREPPSDISLS) is disordered. Over residues 144–158 (AKRKDRRSKTNGSKR) the composition is skewed to basic residues. Residues 159–168 (QKAEANREPP) are compositionally biased toward basic and acidic residues. ATP contacts are provided by residues 215 to 222 (GPPGCGKT) and 533 to 540 (GPPGCGKT). A disordered region spans residues 759–779 (DRQKYQRLAKRWSSASTNDAD).

The protein belongs to the AAA ATPase family.

The protein localises to the nucleus. This is an uncharacterized protein from Schizosaccharomyces pombe (strain 972 / ATCC 24843) (Fission yeast).